The sequence spans 462 residues: Flavin-containing monooxygenase FMO GS-OX3 (462 aa).

Position 17–22 (17–22 (GAGPAG)) interacts with FAD. NADP(+) is bound at residue 212 to 217 (GNFASG). A helical membrane pass occupies residues 318 to 338 (ALAPGLAFVGLPAMGIVFVMF).

The protein belongs to the FMO family.

It localises to the membrane. The enzyme catalyses a (Z)-omega-(methylsulfanyl)-N-sulfo-alkylhydroximate S-glucoside + NADPH + O2 + H(+) = a (Z)-omega-(methylsulfinyl)-alkyl-glucosinolate + NADP(+) + H2O. Catalyzes the conversion of methylthioalkyl glucosinolates of any chain length into methylsulfinylalkyl glucosinolates. Prefers probably short-chain methylthioalkyl glucosinolates in cv. Landsberg erecta. The polypeptide is Flavin-containing monooxygenase FMO GS-OX3 (FMOGS-OX3) (Arabidopsis thaliana (Mouse-ear cress)).